Consider the following 304-residue polypeptide: Oxygen-dependent coproporphyrinogen-III oxidase (304 aa).

S93 serves as a coordination point for substrate. H97 and H107 together coordinate a divalent metal cation. Catalysis depends on H107, which acts as the Proton donor. 109–111 is a substrate binding site; it reads NVR. Residues H146 and H176 each coordinate a divalent metal cation. The segment at 241–276 is important for dimerization; it reads YVEFNLVYDRGTLFGLQSGGRTESILMSLPPQVRWA. Substrate is bound at residue 259–261; it reads GGR.

Belongs to the aerobic coproporphyrinogen-III oxidase family. As to quaternary structure, homodimer. A divalent metal cation serves as cofactor.

Its subcellular location is the cytoplasm. It carries out the reaction coproporphyrinogen III + O2 + 2 H(+) = protoporphyrinogen IX + 2 CO2 + 2 H2O. It functions in the pathway porphyrin-containing compound metabolism; protoporphyrin-IX biosynthesis; protoporphyrinogen-IX from coproporphyrinogen-III (O2 route): step 1/1. In terms of biological role, involved in the heme biosynthesis. Catalyzes the aerobic oxidative decarboxylation of propionate groups of rings A and B of coproporphyrinogen-III to yield the vinyl groups in protoporphyrinogen-IX. This is Oxygen-dependent coproporphyrinogen-III oxidase from Pseudomonas fluorescens (strain Pf0-1).